The primary structure comprises 133 residues: uncharacterized protein (133 aa).

In terms of domain architecture, HIT spans isoleucine 3–phenylalanine 106. Residues histidine 90–histidine 94 carry the Histidine triad motif motif.

This is an uncharacterized protein from Mycobacterium tuberculosis (strain ATCC 25618 / H37Rv).